Consider the following 368-residue polypeptide: Phosphate acyltransferase (368 aa).

The interval 334 to 368 (EGSLEQAARDASGAGHASPIAGQPAEPYAAQSSKA) is disordered.

Belongs to the PlsX family. Homodimer. Probably interacts with PlsY.

It is found in the cytoplasm. It carries out the reaction a fatty acyl-[ACP] + phosphate = an acyl phosphate + holo-[ACP]. Its pathway is lipid metabolism; phospholipid metabolism. Functionally, catalyzes the reversible formation of acyl-phosphate (acyl-PO(4)) from acyl-[acyl-carrier-protein] (acyl-ACP). This enzyme utilizes acyl-ACP as fatty acyl donor, but not acyl-CoA. The protein is Phosphate acyltransferase of Paraburkholderia xenovorans (strain LB400).